The chain runs to 485 residues: Pumilio domain-containing protein 6 (485 aa).

Disordered stretches follow at residues 29–48 (NKTHKNKNPKPPVKLLPYRH) and 55–76 (SDLDNYIFNSGSGSSDDETPPP). Polar residues predominate over residues 55 to 68 (SDLDNYIFNSGSGS). 8 Pumilio repeats span residues 86–124 (EVLLNGLLIDFAIDPSGVKFLEANYPLDSEDQIRKAVFE), 125–163 (KLTESTTLFVGLCHSRNGNFIVQKLVELATPAEQRELLR), 164–200 (QMIDGGLLVMCKDKFACRVVQLALQKFDHSNVFQLIQ), 201–236 (ELSTFDLAAMCTDQISIHVIQRVVKQLPVDMWTFFV), 237–279 (HFLS…FRIQ), 287–324 (CIVRNCYRLSSNEFANYVIQYVIKSSGIMEMYRDTIID), 326–361 (CLLRNLLSMSQDKYASHVIEGAFLFAPPALLHEMME), and 372–411 (ELNRDALDILLFHQYGNYVVQQMISICTAALIGKEERQLP). An RNA-binding region spans residues 439–454 (FSSGKKIIDSVMRHGV).

Its function is as follows. RNA-binding protein that binds to the consensus sequence 5'-CUCUGUAUCUUGU-3' in mRNA 3'-UTRs and modulates mRNA expression and stability. Functions redundantly with puf-5 and puf-7 in oocyte formation and organization, early embryonic cell divisions, and repression of expression of glp-1 and other maternal mRNAs in late oogenesis. The chain is Pumilio domain-containing protein 6 from Caenorhabditis elegans.